The chain runs to 730 residues: Probable G-protein coupled receptor 149 (730 aa).

At 1–34 (MSFFLSNLTNDSRLWKVSHNSTDLMNSPETLTLS) the chain is on the extracellular side. 3 N-linked (GlcNAc...) asparagine glycosylation sites follow: asparagine 7, asparagine 10, and asparagine 20. The chain crosses the membrane as a helical span at residues 35–55 (LFCLICLMTLVALVGSIFSLV). At 56–68 (SLLTMQYRTVVSM) the chain is on the cytoplasmic side. Residues 69–89 (LVTSWSVDDLLSVLSVAIFMV) traverse the membrane as a helical segment. Residues 90–108 (LQWPREAPGYFQSLCTTSA) are Extracellular-facing. A disulfide bond links cysteine 104 and cysteine 181. A helical transmembrane segment spans residues 109 to 131 (LLYMCQGLSSNLKATLIVFYNFY). At 132–148 (TMHRTVVSQSSSWRSGQ) the chain is on the cytoplasmic side. Residues 149–169 (VLGVALTVWAVSLLLASLPLC) form a helical membrane-spanning segment. Residues 170 to 188 (GWGVFVRTPWGCLTDCSSP) lie on the Extracellular side of the membrane. Residues 189–209 (YVLLLFAVYASAFGLLAVLSV) form a helical membrane-spanning segment. Topologically, residues 210 to 308 (PLTHQLLCSE…SFPVSLAQKR (99 aa)) are cytoplasmic. A helical transmembrane segment spans residues 309 to 329 (FALILALTKVILWLPMMIHMV). The Extracellular portion of the chain corresponds to 330–340 (VKHVVGFQSLP). A helical membrane pass occupies residues 341 to 361 (VDMLSFLLTLLASTVTPVFVL). Topologically, residues 362–730 (SKRWAHLPCG…RKREAESKGN (369 aa)) are cytoplasmic.

It belongs to the G-protein coupled receptor 1 family. Expressed exclusively in brain and testis.

It localises to the cell membrane. In terms of biological role, orphan receptor. The chain is Probable G-protein coupled receptor 149 (Gpr149) from Rattus norvegicus (Rat).